The chain runs to 403 residues: Acetate kinase (403 aa).

Asparagine 7 contributes to the Mg(2+) binding site. ATP is bound at residue lysine 14. Arginine 90 provides a ligand contact to substrate. Aspartate 147 (proton donor/acceptor) is an active-site residue. Residues 207–211 (HIGNG), 283–285 (DMR), and 331–335 (GVGEN) each bind ATP. Glutamate 386 serves as a coordination point for Mg(2+).

It belongs to the acetokinase family. In terms of assembly, homodimer. Mg(2+) is required as a cofactor. Mn(2+) serves as cofactor.

The protein resides in the cytoplasm. The catalysed reaction is acetate + ATP = acetyl phosphate + ADP. It participates in metabolic intermediate biosynthesis; acetyl-CoA biosynthesis; acetyl-CoA from acetate: step 1/2. Its function is as follows. Catalyzes the formation of acetyl phosphate from acetate and ATP. Can also catalyze the reverse reaction. The protein is Acetate kinase of Thermotoga petrophila (strain ATCC BAA-488 / DSM 13995 / JCM 10881 / RKU-1).